Here is a 254-residue protein sequence, read N- to C-terminus: Probable 2,4-dienoyl-CoA reductase [(2E)-enoyl-CoA-producing] (254 aa).

NADP(+) is bound at residue 6–38 (VIITGGSSGMGKAMAKKQAELGWHVMVTGRNHE). Threonine 100 is a binding site for substrate. The Proton acceptor role is filled by tyrosine 142. Lysine 157 is an NAD(+) binding site.

This sequence belongs to the short-chain dehydrogenases/reductases (SDR) family. 2,4-dienoyl-CoA reductase subfamily.

The enzyme catalyses a 4,5-saturated-(2E)-enoyl-CoA + NADP(+) = a (2E,4E)-dienoyl-CoA + NADPH + H(+). It carries out the reaction a (2E,4Z)-dienoyl-CoA + NADPH + H(+) = a 4,5-saturated-(2E)-enoyl-CoA + NADP(+). It functions in the pathway lipid metabolism; fatty acid beta-oxidation. Functionally, auxiliary enzyme of beta-oxidation. It participates in the metabolism of unsaturated fatty enoyl-CoA esters having double bonds in both even- and odd-numbered positions. Catalyzes the NADP-dependent reduction of 2,4-dienoyl-CoA to yield trans-3-enoyl-CoA. The protein is Probable 2,4-dienoyl-CoA reductase [(2E)-enoyl-CoA-producing] (fadH) of Bacillus subtilis (strain 168).